The sequence spans 357 residues: Sorbitol dehydrogenase (357 aa).

Alanine 2 bears the N-acetylalanine mark. Cysteine 45 lines the Zn(2+) pocket. Tyrosine 51 serves as a coordination point for substrate. Residues histidine 70 and glutamate 71 each coordinate Zn(2+). Position 156 (glutamate 156) interacts with substrate. Serine 169 is modified (phosphoserine). NAD(+)-binding positions include valine 184, aspartate 204, arginine 209, 273–275 (VGM), and 297–299 (VFR). Residues arginine 299 and tyrosine 300 each contribute to the substrate site.

This sequence belongs to the zinc-containing alcohol dehydrogenase family. In terms of assembly, homotetramer. Zn(2+) is required as a cofactor. As to expression, testis has the highest level of expression, followed by kidney, liver, and lung. Low levels of expression are also observed in lens, brain, and skeletal muscle. Expressed in sperm flagellum and very low expression in the sperm head.

It is found in the mitochondrion membrane. The protein localises to the cell projection. Its subcellular location is the cilium. The protein resides in the flagellum. It carries out the reaction keto-D-fructose + NADH + H(+) = D-sorbitol + NAD(+). The enzyme catalyses xylitol + NAD(+) = D-xylulose + NADH + H(+). It catalyses the reaction L-iditol + NAD(+) = keto-L-sorbose + NADH + H(+). Its activity is regulated as follows. Inhibited in vitro by p-hydroxymercuribenzoate, EDTA, l,l0-phenanthroline and N-ethylmaleimide. Functionally, polyol dehydrogenase that catalyzes the reversible NAD(+)-dependent oxidation of various sugar alcohols. Is active with D-sorbitol (D-glucitol) leading to the C2-oxidized product D-fructose. Is a key enzyme in the polyol pathway that interconverts glucose and fructose via sorbitol, which constitutes an important alternate route for glucose metabolism. May play a role in sperm motility by using sorbitol as an alternative energy source for sperm motility and protein tyrosine phosphorylation. Has no activity on ethanol. Cannot use NADP(+) as the electron acceptor. The polypeptide is Sorbitol dehydrogenase (Sord) (Mus musculus (Mouse)).